The following is a 438-amino-acid chain: Cyanidin-3-O-glucoside 2-O-glucuronosyltransferase (438 aa).

UDP-alpha-D-glucuronate is bound by residues serine 264, 315–316, 333–341, and 355–358; these read WV, HCGWSSTME, and QFDQ.

It belongs to the UDP-glycosyltransferase family. Monomer. In terms of tissue distribution, expressed in petals. Not detected in sepals, stems, leaves, tubular corollas and white petals.

Its subcellular location is the cytoplasm. It catalyses the reaction cyanidin 3-O-beta-D-glucoside + UDP-alpha-D-glucuronate = cyanidin 3-O-(2-O-beta-D-glucuronosyl)-beta-D-glucoside + UDP + H(+). With respect to regulation, inhibited by copper, mercury, UDP, UTP and partially by calcium, cadmium, iron and UMP. Not affected by cobalt, magnesium, manganese, zinc, nickel, tin, uridine, sadium malonate and glucose. Involved in the production of glucuronosylated anthocyanins that are the origin of the red coloration of flowers. Can use cyanidin 3-O-6''-O-malonylglucoside, cyanidin 3-O-glucoside and delphinidin 3-O-glucosideas substrates, but not pelargonidin 3-O-glucoside, cyanidin 3-O-3'',6''-O-dimalonylglucoside, pelargonidin 3,5-O-diglucoside, pelargonidin 3-O-6''-O-malonylglucoside-5-O-glucoside, quercetin 3-O-glucoside, quercetin 3-O-6''-O-malonylglucoside, daidzin, genistin,7-O-6''-O-malonylglucosides of daidzein and genistein, cyanidin, quercetin, daidzein, genistein p-Nitrophenyl beta-D-glucopyranoside, beta-estradiol, 17alpha-estradiol, 1-naphthol, 2-naphthol, 4-methylumbelliferone, and p-nitrophenol. Highly specific for UDP-glucuronate (UDP-GlcUA). Arg-25 is decisive with respect to UDP-sugar specificity. This Bellis perennis (English daisy) protein is Cyanidin-3-O-glucoside 2-O-glucuronosyltransferase (UGAT).